A 132-amino-acid polypeptide reads, in one-letter code: Phosphomevalonate dehydratase small subunit (132 aa).

Ser-62 acts as the Proton acceptor in catalysis.

This sequence belongs to the AcnX type II small subunit family. As to quaternary structure, heterodimer composed of a large subunit (PMDh-L) and a small subunit (PMDh-S).

The enzyme catalyses (R)-5-phosphomevalonate = (2E)-3-methyl-5-phosphooxypent-2-enoate + H2O. It functions in the pathway isoprenoid biosynthesis; isopentenyl diphosphate biosynthesis via mevalonate pathway. Its function is as follows. Component of a hydro-lyase that catalyzes the dehydration of mevalonate 5-phosphate (MVA5P) to form trans-anhydromevalonate 5-phosphate (tAHMP). Involved in the archaeal mevalonate (MVA) pathway, which provides fundamental precursors for isoprenoid biosynthesis, such as isopentenyl diphosphate (IPP) and dimethylallyl diphosphate (DMAPP). The polypeptide is Phosphomevalonate dehydratase small subunit (Methanocella arvoryzae (strain DSM 22066 / NBRC 105507 / MRE50)).